Consider the following 181-residue polypeptide: Nucleoside triphosphate/diphosphate phosphatase (181 aa).

The active-site Proton donor is R26. Mg(2+) is bound by residues N90, D106, D108, D110, D123, and E126.

Belongs to the Ntdp family. The cofactor is Mg(2+).

It carries out the reaction a ribonucleoside 5'-triphosphate + H2O = a ribonucleoside 5'-diphosphate + phosphate + H(+). The catalysed reaction is a ribonucleoside 5'-diphosphate + H2O = a ribonucleoside 5'-phosphate + phosphate + H(+). Its function is as follows. Has nucleoside phosphatase activity towards nucleoside triphosphates and nucleoside diphosphates. This chain is Nucleoside triphosphate/diphosphate phosphatase, found in Ligilactobacillus salivarius (strain UCC118) (Lactobacillus salivarius).